A 273-amino-acid chain; its full sequence is Tryptophan synthase alpha chain (273 aa).

Catalysis depends on proton acceptor residues Glu-56 and Asp-67.

This sequence belongs to the TrpA family. In terms of assembly, tetramer of two alpha and two beta chains.

It catalyses the reaction (1S,2R)-1-C-(indol-3-yl)glycerol 3-phosphate + L-serine = D-glyceraldehyde 3-phosphate + L-tryptophan + H2O. It participates in amino-acid biosynthesis; L-tryptophan biosynthesis; L-tryptophan from chorismate: step 5/5. Functionally, the alpha subunit is responsible for the aldol cleavage of indoleglycerol phosphate to indole and glyceraldehyde 3-phosphate. This Shewanella baltica (strain OS185) protein is Tryptophan synthase alpha chain.